Here is a 349-residue protein sequence, read N- to C-terminus: Isopentenyl-diphosphate delta-isomerase (349 aa).

6 to 7 (RK) lines the substrate pocket. Residues 62 to 64 (AMT), Ser-93, and Asn-122 contribute to the FMN site. Gln-152 is a substrate binding site. Position 153 (Glu-153) interacts with Mg(2+). FMN is bound by residues Lys-184, Thr-214, 258–259 (GG), and 280–281 (AG).

This sequence belongs to the IPP isomerase type 2 family. Homooctamer. Dimer of tetramers. FMN is required as a cofactor. The cofactor is NADPH. It depends on Mg(2+) as a cofactor.

Its subcellular location is the cytoplasm. The catalysed reaction is isopentenyl diphosphate = dimethylallyl diphosphate. Involved in the biosynthesis of isoprenoids. Catalyzes the 1,3-allylic rearrangement of the homoallylic substrate isopentenyl (IPP) to its allylic isomer, dimethylallyl diphosphate (DMAPP). This is Isopentenyl-diphosphate delta-isomerase from Bacillus cytotoxicus (strain DSM 22905 / CIP 110041 / 391-98 / NVH 391-98).